A 218-amino-acid chain; its full sequence is Small ribosomal subunit protein uS3c (218 aa).

The 71-residue stretch at 39–109 folds into the KH type-2 domain; it reads IRNYVKVNLS…QIRINVTELK (71 aa).

It belongs to the universal ribosomal protein uS3 family. As to quaternary structure, part of the 30S ribosomal subunit.

Its subcellular location is the plastid. The protein localises to the chloroplast. This chain is Small ribosomal subunit protein uS3c (rps3), found in Rhodomonas salina (Cryptomonas salina).